The sequence spans 93 residues: uncharacterized protein (93 aa).

The signal sequence occupies residues 1–22 (MSIPNLSSVTQLLSIATGLVST). The N-linked (GlcNAc...) asparagine; by host glycan is linked to asparagine 5.

This is an uncharacterized protein from Invertebrate iridescent virus 6 (IIV-6).